The primary structure comprises 264 residues: tRNA (guanine-N(1)-)-methyltransferase (264 aa).

Residues Gly-133 and 152–157 each bind S-adenosyl-L-methionine; that span reads LGDFVM. The span at 240-251 shows a compositional bias: basic and acidic residues; that stretch reads QRRPDLWRKARG. The tract at residues 240-264 is disordered; sequence QRRPDLWRKARGGEPPADESGEVRR. The span at 255-264 shows a compositional bias: acidic residues; the sequence is PADESGEVRR.

The protein belongs to the RNA methyltransferase TrmD family. In terms of assembly, homodimer.

It localises to the cytoplasm. It carries out the reaction guanosine(37) in tRNA + S-adenosyl-L-methionine = N(1)-methylguanosine(37) in tRNA + S-adenosyl-L-homocysteine + H(+). Its function is as follows. Specifically methylates guanosine-37 in various tRNAs. This Sorangium cellulosum (strain So ce56) (Polyangium cellulosum (strain So ce56)) protein is tRNA (guanine-N(1)-)-methyltransferase.